The following is a 151-amino-acid chain: MTPAVSPAHTVLFEAKARKGISFEQIGKAIGRDEVWVASAFYGQAKFNEEELKKLSEVLEISSAQIVKELGDQWFPNRGLGPVPPSDPVIYRLFEGVLVYGHPIKAIIHEKFGDGIMSMIDCNINVERKPDPKGDRVVVTFDGKFLPYSKW.

Catalysis depends on residues arginine 92, glutamate 95, and serine 118.

Belongs to the cyanase family.

It carries out the reaction cyanate + hydrogencarbonate + 3 H(+) = NH4(+) + 2 CO2. Catalyzes the reaction of cyanate with bicarbonate to produce ammonia and carbon dioxide. The chain is Cyanate hydratase from Coprinopsis cinerea (strain Okayama-7 / 130 / ATCC MYA-4618 / FGSC 9003) (Inky cap fungus).